Reading from the N-terminus, the 462-residue chain is Probable protein phosphatase 2C 1 (462 aa).

The 303-residue stretch at 60-362 (SSCIFTQQGR…DDCAVVCLFL (303 aa)) folds into the PPM-type phosphatase domain. The Mn(2+) site is built by Asp-95, Gly-96, Asp-307, and Asp-353. Disordered regions lie at residues 369 to 394 (ETSD…QGAE) and 421 to 443 (EADN…LEGV). The segment covering 376-385 (QCFSSATNAV) has biased composition (polar residues). Residues 424–434 (NAEKEKTREGE) show a composition bias toward basic and acidic residues.

This sequence belongs to the PP2C family. In terms of assembly, interacts with GCN5. Requires Mg(2+) as cofactor. It depends on Mn(2+) as a cofactor.

The enzyme catalyses O-phospho-L-seryl-[protein] + H2O = L-seryl-[protein] + phosphate. It carries out the reaction O-phospho-L-threonyl-[protein] + H2O = L-threonyl-[protein] + phosphate. Its function is as follows. May act as negative regulator of GCN5. In Arabidopsis thaliana (Mouse-ear cress), this protein is Probable protein phosphatase 2C 1 (PPC6-6).